Consider the following 111-residue polypeptide: Protein GLUTAMINE DUMPER 6 (111 aa).

Residues 1–16 (MRPTPKVEIWKSPVPY) are Extracellular-facing. The helical transmembrane segment at 17 to 37 (LFGGLFLLVLLIALALLSLVC) threads the bilayer. Residues 38 to 111 (THQKPSSSSN…NCDNVTVIST (74 aa)) lie on the Cytoplasmic side of the membrane. The span at 40–49 (QKPSSSSNNN) shows a compositional bias: polar residues. The disordered stretch occupies residues 40–63 (QKPSSSSNNNHMDEEDDVGDKDAK). The short motif at 75 to 79 (VILAG) is the VIMAG; degenerate element.

The protein belongs to the GLUTAMINE DUMPER 1 (TC 9.B.60) family. Expressed in the vascular tissues.

It localises to the membrane. In terms of biological role, probable subunit of an amino acid transporter involved in the regulation of the amino acid metabolism. Stimulates amino acid export by activating nonselective amino acid facilitators. The sequence is that of Protein GLUTAMINE DUMPER 6 (GDU6) from Arabidopsis thaliana (Mouse-ear cress).